Here is a 64-residue protein sequence, read N- to C-terminus: Large ribosomal subunit protein bL35 (64 aa).

Positions 22 to 31 (GKVKHGHAYR) are enriched in basic residues. Residues 22-64 (GKVKHGHAYRSHLAQSKTTKQKRQSRKSTLMNNSDFKRLKKLI) form a disordered region.

The protein belongs to the bacterial ribosomal protein bL35 family.

This Mesomycoplasma hyopneumoniae (strain 232) (Mycoplasma hyopneumoniae) protein is Large ribosomal subunit protein bL35.